Reading from the N-terminus, the 218-residue chain is Akirin (218 aa).

Residues 96 to 150 (KAIPRSNDFDDDGDQRGDGCSSNYSKAYRAPSSPKSGSDSEGEAPSTSVTDRSSA) form a disordered region. Residues 128 to 147 (SPKSGSDSEGEAPSTSVTDR) show a composition bias toward polar residues.

Belongs to the akirin family. In terms of assembly, interacts with hda-1, a component of the NuRD complex. Interacts with let-418, a component of the NuRD and MEC complexes. Interacts with the transcription factor ceh-18. Interacts with ima-2. Localizes to somatic tissues throughout the body, including muscle cells. Expressed in lateral epithelial seam cells, the hyp7 epidermal syncytium, and multiple head and tail neurons.

It is found in the nucleus. Molecular adapter that acts as a bridge between a variety of multiprotein complexes, and which is involved in antifungal innate immunity, development of the muscle and sister chromatid cohesion. Plays a role in antifungal innate immunity by acting as a bridge between components of the NuRD (Nucleosome Remodeling and Deacetylase) and MEC chromatin remodeling complexes. NuRD and MEC complexes bind to the promoters of antimicrobial peptide genes and may recruit other proteins such as ceh-18 to control gene expression in response to fungal infection. During meiotic prophase I, plays a role in the disassembly of synaptonemal complex proteins and in the regulation of chromosome condensation and segregation. Together with nuclear import receptor ima-2, required for the import and load of cohesin complex proteins in meiotic nuclei, possibly by acting as a bridge between ima-2 and cohesins. Required for embryonic development of muscle tissue. This chain is Akirin, found in Caenorhabditis elegans.